We begin with the raw amino-acid sequence, 139 residues long: Large ribosomal subunit protein uL16 (139 aa).

Basic residues predominate over residues 1–17 (MLMPKRVKYRKSQRGRM). The tract at residues 1–24 (MLMPKRVKYRKSQRGRMKGNSGRG) is disordered.

It belongs to the universal ribosomal protein uL16 family. In terms of assembly, part of the 50S ribosomal subunit.

Functionally, binds 23S rRNA and is also seen to make contacts with the A and possibly P site tRNAs. This Chlorobium limicola (strain DSM 245 / NBRC 103803 / 6330) protein is Large ribosomal subunit protein uL16.